The primary structure comprises 232 residues: Putative N-acetylmannosamine-6-phosphate 2-epimerase (232 aa).

The protein belongs to the NanE family.

It carries out the reaction an N-acyl-D-glucosamine 6-phosphate = an N-acyl-D-mannosamine 6-phosphate. The protein operates within amino-sugar metabolism; N-acetylneuraminate degradation; D-fructose 6-phosphate from N-acetylneuraminate: step 3/5. In terms of biological role, converts N-acetylmannosamine-6-phosphate (ManNAc-6-P) to N-acetylglucosamine-6-phosphate (GlcNAc-6-P). This is Putative N-acetylmannosamine-6-phosphate 2-epimerase from Synechococcus elongatus (strain ATCC 33912 / PCC 7942 / FACHB-805) (Anacystis nidulans R2).